We begin with the raw amino-acid sequence, 362 residues long: MSRAPTLAAAAAVAAVVLICSSSTATAADGNARQPPLAPGLSFDFYKRSCPKAESIVRSFVQDAVRRDVGLAAGLLRLHFHDCFVQGCDASVLLDGSATGPGEQQAPPNLTLRPTAFKAINDIHDRLHKECGGTVVSCSDVLALAARDSVVVSGGPSYKVPLGRRDSASFATQQDVLSGLPPPTAAVPALLAVLSKINLDATDLVALSGGHTIGLGHCTSFEDRLFPRPDPTLNATFAGQLRRTCPAKGTDRRTPLDVRTPNAFDNKYYVNLVNREGLFTSDQDLFSNARTRALVDKFARSQRDFFDQFAFSVVKMGQIKVLTGTQGQIRTNCSARNAAGTTMLPWSVSVVEEAADESLGVF.

The first 31 residues, 1–31 (MSRAPTLAAAAAVAAVVLICSSSTATAADGN), serve as a signal peptide directing secretion. Disulfide bonds link cysteine 50–cysteine 131, cysteine 83–cysteine 88, cysteine 138–cysteine 333, and cysteine 218–cysteine 245. Histidine 81 acts as the Proton acceptor in catalysis. Ca(2+) is bound by residues aspartate 82, valine 85, glycine 87, aspartate 89, and serine 91. The N-linked (GlcNAc...) asparagine glycan is linked to asparagine 109. A (indol-3-yl)acetate-binding site is contributed by threonine 111. Proline 181 contacts substrate. Histidine 211 is a heme b binding site. A Ca(2+)-binding site is contributed by threonine 212. An N-linked (GlcNAc...) asparagine glycan is attached at asparagine 234. Ca(2+) contacts are provided by aspartate 257, threonine 260, alanine 263, and aspartate 265. Asparagine 332 carries N-linked (GlcNAc...) asparagine glycosylation.

The protein belongs to the peroxidase family. Classical plant (class III) peroxidase subfamily. Monomer. Heme b is required as a cofactor. It depends on Ca(2+) as a cofactor. In terms of processing, the proportions of glycoforms I and II are 35% and 65% respectively. In terms of tissue distribution, present in germinated and ungerminated grain, seedlings, and leaves and stem of the mature plant.

The protein localises to the secreted. The enzyme catalyses 2 a phenolic donor + H2O2 = 2 a phenolic radical donor + 2 H2O. Removal of H(2)O(2), oxidation of toxic reductants, biosynthesis and degradation of lignin, suberization, auxin catabolism, response to environmental stresses such as wounding, pathogen attack and oxidative stress. These functions might be dependent on each isozyme/isoform in each plant tissue. Has a high preference for hydroxycinnamates as substrates. Substrate preference is ferulic acid &gt; p-coumaric acid &gt; N-acetyl tyrosine methyl ester &gt; N-acetyl-tyrosine &gt; tyrosine &gt; catechol &gt; Gly-Tyr-Gly. May be involved in the formation of diferulate linkages in the plant cell wall. This Sorghum bicolor (Sorghum) protein is Cationic peroxidase SPC4.